We begin with the raw amino-acid sequence, 1024 residues long: PH and SEC7 domain-containing protein 1 (1024 aa).

The interval 67–96 (CTPLRAPPSPHIAPSPWGPSSPTGQPPPGA) is disordered. Over residues 71 to 95 (RAPPSPHIAPSPWGPSSPTGQPPPG) the composition is skewed to pro residues. A phosphoserine mark is found at serine 126 and serine 156. Disordered regions lie at residues 154–195 (STSD…LPNG), 250–277 (PSSGAKPPEQVLPSRGVGSKQGSGVAVG), 307–401 (REEA…GPDS), and 434–536 (PTQS…LDST). Positions 348–365 (NEDDEAGGEEDVDDEVFE) are enriched in acidic residues. Positions 445–463 (PPQPPAPRPDPPAPAPLAP) are enriched in pro residues. Residues 495–507 (PRKELPSPSHSED) are compositionally biased toward basic and acidic residues. An SEC7 domain is found at 512–706 (GAAPLGSEPP…KALYSSIKNE (195 aa)). Serine 720 carries the post-translational modification Phosphoserine. A PH domain is found at 756–869 (AVYKHGALVR…WITRINVVAA (114 aa)). Coiled coils occupy residues 898–924 (LSQEEQVRTHEAKLKAMASELREHRAA) and 956–983 (AALLRVKMKAASEELDTIEAALAQAGST). The interval 976-1024 (ALAQAGSTEDGCPPPHSSPSLRPKPTSQPRAQRPGSETRAGAGSTRPKP) is disordered.

The protein belongs to the PSD family. In terms of assembly, interacts with ACTN1. Interacts (ARF6-bound form) with KCNK1; does not interact with KCNK1 in the absence of ARF6. Highest expression detected in brain and some expression detected also in uterus, stomach, ovary and intestine, with isoform 2 being expressed at the highest levels. In the brain, isoform 1 is highly expressed in the strata oriens, radiatum, lacunosum-moleculare of the hippocampal CA1-3 regions and the dentate molecular layer of the hippocampal formation, with lower levels detected in the neuronal cell layers and the stratum lucidum (at protein level). Not detected in tongue, thymus, spleen, lung, heart, liver and kidney.

The protein localises to the cell membrane. Its subcellular location is the cell projection. It localises to the ruffle. The protein resides in the ruffle membrane. It is found in the cleavage furrow. Guanine nucleotide exchange factor for ARF6. Isoform 2 and isoform 3 induce cytoskeletal remodeling, but lead to distinct morphological changes in HeLa cells: isoform 2 induces cell elongation and formation of actin-rich protrusions, whereas isoform 3 promotes the formation of membrane ruffles and loss of stress fibers. The sequence is that of PH and SEC7 domain-containing protein 1 (Psd) from Mus musculus (Mouse).